Consider the following 218-residue polypeptide: Histone H1 (218 aa).

Composition is skewed to low complexity over residues 1 to 19 (MSET…GAKA) and 27 to 39 (AAGG…PAGP). 2 disordered regions span residues 1–41 (MSET…GPSV) and 89–218 (VGKG…PKKK). Position 2 is an N-acetylserine (S2). Positions 37–110 (AGPSVTELIT…GASGSFKLNK (74 aa)) constitute an H15 domain. Composition is skewed to basic residues over residues 119-133 (ATKK…KPAA), 141-158 (KKPK…KAKK), 166-184 (KAAK…KKAA), and 191-218 (KAVK…PKKK).

This sequence belongs to the histone H1/H5 family.

Its subcellular location is the nucleus. The protein localises to the chromosome. In terms of biological role, histones H1 are necessary for the condensation of nucleosome chains into higher-order structures. This is Histone H1 from Anas platyrhynchos (Mallard).